The chain runs to 340 residues: UDP-N-acetylglucosamine--N-acetylmuramyl-(pentapeptide) pyrophosphoryl-undecaprenol N-acetylglucosamine transferase (340 aa).

Residues 10–12 (TGG), Asn-110, Ser-171, and Gln-272 each bind UDP-N-acetyl-alpha-D-glucosamine.

It belongs to the glycosyltransferase 28 family. MurG subfamily.

The protein localises to the cell membrane. It carries out the reaction di-trans,octa-cis-undecaprenyl diphospho-N-acetyl-alpha-D-muramoyl-L-alanyl-D-glutamyl-meso-2,6-diaminopimeloyl-D-alanyl-D-alanine + UDP-N-acetyl-alpha-D-glucosamine = di-trans,octa-cis-undecaprenyl diphospho-[N-acetyl-alpha-D-glucosaminyl-(1-&gt;4)]-N-acetyl-alpha-D-muramoyl-L-alanyl-D-glutamyl-meso-2,6-diaminopimeloyl-D-alanyl-D-alanine + UDP + H(+). The protein operates within cell wall biogenesis; peptidoglycan biosynthesis. Its function is as follows. Cell wall formation. Catalyzes the transfer of a GlcNAc subunit on undecaprenyl-pyrophosphoryl-MurNAc-pentapeptide (lipid intermediate I) to form undecaprenyl-pyrophosphoryl-MurNAc-(pentapeptide)GlcNAc (lipid intermediate II). The chain is UDP-N-acetylglucosamine--N-acetylmuramyl-(pentapeptide) pyrophosphoryl-undecaprenol N-acetylglucosamine transferase from Wolbachia pipientis subsp. Culex pipiens (strain wPip).